Reading from the N-terminus, the 208-residue chain is Ribonuclease HII (208 aa).

The RNase H type-2 domain occupies 17–208 (LRVCGIDEAG…SFRLRQLGEK (192 aa)). A divalent metal cation is bound by residues Asp-23, Glu-24, and Asp-120.

Belongs to the RNase HII family. Mn(2+) is required as a cofactor. Mg(2+) serves as cofactor.

It is found in the cytoplasm. It catalyses the reaction Endonucleolytic cleavage to 5'-phosphomonoester.. Its function is as follows. Endonuclease that specifically degrades the RNA of RNA-DNA hybrids. The sequence is that of Ribonuclease HII from Chlorobium luteolum (strain DSM 273 / BCRC 81028 / 2530) (Pelodictyon luteolum).